Here is a 284-residue protein sequence, read N- to C-terminus: Protoheme IX farnesyltransferase (284 aa).

The next 8 helical transmembrane spans lie at 13–33 (IIIGNIILIIGSFLFSSFPFF), 35–55 (VFLFFFTILGTSLVIASSCIF), 87–107 (IFASFIGIVGFFILGLFVNIL), 108–128 (SMFLSFIGFVIYVFFYTFFLK), 133–153 (YSTFIGSFSGSIPSVIGHTAI), 162–182 (FLLFIIFIFWQMSHFYAIAIL), 224–244 (FLGYLSYIFLLFFSFFSFYWL), and 264–284 (FYYSIAVVILFNFLISIDFIF).

It belongs to the UbiA prenyltransferase family. Protoheme IX farnesyltransferase subfamily.

The protein resides in the cell membrane. It carries out the reaction heme b + (2E,6E)-farnesyl diphosphate + H2O = Fe(II)-heme o + diphosphate. It functions in the pathway porphyrin-containing compound metabolism; heme O biosynthesis; heme O from protoheme: step 1/1. Functionally, converts heme B (protoheme IX) to heme O by substitution of the vinyl group on carbon 2 of heme B porphyrin ring with a hydroxyethyl farnesyl side group. The polypeptide is Protoheme IX farnesyltransferase (Buchnera aphidicola subsp. Schizaphis graminum (strain Sg)).